The primary structure comprises 217 residues: GRB2-related adapter protein (217 aa).

Positions 1–58 constitute an SH3 1 domain; that stretch reads MESVALYSFQATESDELAFNKGDTLKILNMEDDQNWYKAELRGAEGFVPKNYIRLKPH. In terms of domain architecture, SH2 spans 60-152; the sequence is WYSGRISRQL…KRQVFLQDEE (93 aa). Residues 158 to 217 enclose the SH3 2 domain; sequence PRACFAQAQFDFSAQDPSQLSFRRGDIIEVLERLDPSWWRGRLSGRIGFFPRSYVQPVHM.

Belongs to the GRB2/sem-5/DRK family. In terms of assembly, associates through its SH2 domain with ligand-activated receptors for stem cell factor (KIT) and erythropoietin (EPOR). Also forms a stable complex with the Bcr-Abl oncoprotein. GRAP is associated with the Ras guanine nucleotide exchange factor SOS1, primarily through its N-terminal SH3 domain. Interacts with phosphorylated LAT upon TCR activation. Interacts with SHB.

It is found in the membrane. The protein resides in the synapse. Functionally, couples signals from receptor and cytoplasmic tyrosine kinases to the Ras signaling pathway. Plays a role in the inner ear and in hearing. The chain is GRB2-related adapter protein (GRAP) from Bos taurus (Bovine).